Here is a 460-residue protein sequence, read N- to C-terminus: tRNA modification GTPase MnmE (460 aa).

Positions 24, 81, and 121 each coordinate (6S)-5-formyl-5,6,7,8-tetrahydrofolate. The 168-residue stretch at 218–385 (GMVVAIAGPP…LIAAIEDFAA (168 aa)) folds into the TrmE-type G domain. GTP contacts are provided by residues 228-233 (NVGKST), 247-253 (SPHAGTT), and 272-275 (DTAG). Mg(2+)-binding residues include Ser232 and Thr253. Lys460 is a (6S)-5-formyl-5,6,7,8-tetrahydrofolate binding site.

Belongs to the TRAFAC class TrmE-Era-EngA-EngB-Septin-like GTPase superfamily. TrmE GTPase family. In terms of assembly, homodimer. Heterotetramer of two MnmE and two MnmG subunits. It depends on K(+) as a cofactor.

Its subcellular location is the cytoplasm. In terms of biological role, exhibits a very high intrinsic GTPase hydrolysis rate. Involved in the addition of a carboxymethylaminomethyl (cmnm) group at the wobble position (U34) of certain tRNAs, forming tRNA-cmnm(5)s(2)U34. In Rhodopseudomonas palustris (strain BisB5), this protein is tRNA modification GTPase MnmE.